A 623-amino-acid polypeptide reads, in one-letter code: Transketolase (623 aa).

Position 1 is an N-acetylmethionine (Met-1). At Ser-3 the chain carries Phosphoserine. An N6-acetyllysine mark is found at Lys-6 and Lys-11. His-37 is a substrate binding site. Positions 40 and 77 each coordinate thiamine diphosphate. The residue at position 104 (Ser-104) is a Phosphoserine. Gly-123–Leu-125 serves as a coordination point for thiamine diphosphate. Lys-144 bears the N6-acetyllysine mark. Asp-155 contacts Mg(2+). Gly-156 and Asn-185 together coordinate thiamine diphosphate. Asn-185 and Leu-187 together coordinate Mg(2+). Lys-204, Lys-232, and Lys-241 each carry N6-acetyllysine. Positions 244 and 258 each coordinate thiamine diphosphate. A substrate-binding site is contributed by His-258. Residue Lys-260 is modified to N6-acetyllysine. Tyr-275 is subject to Phosphotyrosine. At Thr-287 the chain carries Phosphothreonine. Phosphoserine is present on Ser-295. The substrate site is built by Arg-318 and Ser-345. Position 345 is a phosphoserine (Ser-345). A Glycyl lysine isopeptide (Lys-Gly) (interchain with G-Cter in SUMO2) cross-link involves residue Lys-352. Residue Glu-366 is the Proton donor of the active site. Phe-392 contributes to the thiamine diphosphate binding site. 2 residues coordinate substrate: His-416 and Asp-424. A thiamine diphosphate-binding site is contributed by Gln-428. Arg-474 is a substrate binding site. An N6-acetyllysine mark is found at Lys-538 and Lys-603.

Belongs to the transketolase family. In terms of assembly, homodimer. It depends on Mg(2+) as a cofactor. Ca(2+) serves as cofactor. The cofactor is Mn(2+). Requires Co(2+) as cofactor. Thiamine diphosphate is required as a cofactor.

It catalyses the reaction D-sedoheptulose 7-phosphate + D-glyceraldehyde 3-phosphate = aldehydo-D-ribose 5-phosphate + D-xylulose 5-phosphate. Functionally, catalyzes the transfer of a two-carbon ketol group from a ketose donor to an aldose acceptor, via a covalent intermediate with the cofactor thiamine pyrophosphate. The sequence is that of Transketolase (TKT) from Homo sapiens (Human).